The chain runs to 349 residues: 5-deoxyribose 1-phosphate isomerase (349 aa).

Substrate is bound by residues 49–51 (RGA), R92, and Q199. D240 serves as the catalytic Proton donor. 250–251 (NK) provides a ligand contact to substrate.

This sequence belongs to the EIF-2B alpha/beta/delta subunits family. DrdI subfamily.

It catalyses the reaction 5-deoxy-alpha-D-ribose 1-phosphate = 5-deoxy-D-ribulose 1-phosphate. It functions in the pathway carbohydrate degradation. Its function is as follows. Catalyzes the isomerization of 5-deoxy-alpha-D-ribose 1-phosphate to 5-deoxy-D-ribulose 1-phosphate, as part of a 5-deoxyribose salvage pathway that recycles this toxic radical SAM enzyme by-product to mainstream metabolites. In Clostridium botulinum (strain 657 / Type Ba4), this protein is 5-deoxyribose 1-phosphate isomerase.